The chain runs to 273 residues: Phosphate import ATP-binding protein PstB (273 aa).

The 240-residue stretch at 19-258 (ISIQNVTISY…FNETEKIFNS (240 aa)) folds into the ABC transporter domain. 51–58 (GPSGCGKS) contributes to the ATP binding site.

This sequence belongs to the ABC transporter superfamily. Phosphate importer (TC 3.A.1.7) family. As to quaternary structure, the complex is composed of two ATP-binding proteins (PstB), two transmembrane proteins (PstC and PstA) and a solute-binding protein (PstS).

The protein resides in the cell inner membrane. The catalysed reaction is phosphate(out) + ATP + H2O = ADP + 2 phosphate(in) + H(+). Functionally, part of the ABC transporter complex PstSACB involved in phosphate import. Responsible for energy coupling to the transport system. The polypeptide is Phosphate import ATP-binding protein PstB (Parasynechococcus marenigrum (strain WH8102)).